The sequence spans 2449 residues: Nonribisomal peptide synthetase phqB (2449 aa).

Residues 253 to 654 form an adenylation 1 region; sequence IQVHSGPGRL…GRRDTVVKIR (402 aa). Residues 795 to 870 form the Carrier 1 domain; sequence LPMTPNEDVL…LRTVAKEARP (76 aa). Serine 815 carries the O-(pantetheine 4'-phosphoryl)serine modification. The interval 913–1337 is condensation 1; the sequence is QDIYPTTPLQ…LISDRDSELL (425 aa). Positions 1357–1756 are adenylation 2; sequence EAQVTRNPSK…TFTFLGRTNQ (400 aa). A Carrier 2 domain is found at 1915–1993; the sequence is WALSKHIGQL…MVAEMIDRTP (79 aa). Serine 1952 is subject to O-(pantetheine 4'-phosphoryl)serine. The tract at residues 2041–2297 is reductase (R) domain; it reads LTGATGFLGT…VAAVDWVASL (257 aa). Residues threonine 2045, methionine 2249, and asparagine 2259 each coordinate NADPH.

The protein belongs to the NRP synthetase family.

It functions in the pathway alkaloid biosynthesis. Nonribisomal peptide synthetase; part of the gene cluster that mediates the biosynthesis of paraherquamide, a fungal indole alkaloid that belongs to a family of natural products containing a characteristic bicyclo[2.2.2]diazaoctane core. The first steps in the biosynthesis of paraherquamide is the production of the beta-methyl-proline precursor from L-isoleucine. They require oxidation of a terminally hydroxylated L-isoleucine to the corresponding aldehyde by enzymes which have still to be identified. Spontaneous cyclization and dehydration would yield the 4-methyl pyrolline-5-carboxylic acid, which is then reduced by the pyrroline-5-carboxylate reductase phqD leading to the beta-methyl-proline precursor. The next step of paraherquamide biosynthesis involves coupling of beta-methyl-proline and L-tryptophan by the bimodular NRPS phqB, to produce a monooxopiperazine intermediate. The reductase (R) domain of phqB utilizes NADPH for hydride transfer to reduce the thioester bond of the T domain-tethered linear dipeptide to a hemithioaminal intermediate, which spontaneously cleaves the C-S bond to release the aldehyde product. This compound undergoes spontaneous cyclization and dehydration to give a dienamine which is reverse prenylated at C-2 by the reverse prenyltransferase phqJ. The other prenyltransferase present in the cluster, phqI may be a redundant gene in the pathway. During biosynthetic assembly, the key step to produce the polycyclic core is catalyzed by the bifunctional reductase and intramolecular [4+2] Diels-Alderase, phqE, resulting in formation of the [2.2.2] diazaoctane intermediate preparaherquamide. Following formation of preparaherquamide, an indole 2,3-epoxidation-initiated pinacol-like rearrangement is catalyzed by the phqK FAD-dependent monooxygenase. The prenyltransferase phqA, the cytochrome P450 monooxygenase phqL, and the FAD-linked oxidoreductase phqH (or the cytochrome P450 monooxygenase phqM), are proposed to be involved in the formation of the pyran ring. The FAD-dependent monooxygenase phqK is likely responsible for generation of the spiro-oxindole, and the N-methylation is likely mediated by the phqN methyltransferase leading to the isolable natural product paraherquamide F. However, the order of these biosynthetic steps has still to be determined. In late-stage paraherquamide biosynthesis, the third P450 monooxygenase, phqO, is probably responsible for the C-14 hydroxylation, transforming paraherquamide F to paraherquamide G, and paraherquamide E to the final product paraherquamide A. The expansion from the 6-membered ring pyran (in paraherquamides F and G) to the 7-membered dioxepin ring (in paraherquamides A and E) represents a poorly understood but intriguing process that probably involves the 2-oxoglutarate-dependent dioxygenase phqC. Finally, the remaining members of the paraherquamide cluster, including phqI as well as phqM (or phqH), do not have a clearly prescribed role and appear to be redundant. In Penicillium fellutanum, this protein is Nonribisomal peptide synthetase phqB.